The primary structure comprises 160 residues: Ribosome maturation factor RimP (160 aa).

It belongs to the RimP family.

It localises to the cytoplasm. Its function is as follows. Required for maturation of 30S ribosomal subunits. This Orientia tsutsugamushi (strain Ikeda) (Rickettsia tsutsugamushi) protein is Ribosome maturation factor RimP.